Consider the following 460-residue polypeptide: Elongation factor 1-alpha (460 aa).

Gly-2 bears the N,N,N-trimethylglycine mark. Position 3 is an N6,N6-dimethyllysine; alternate (Lys-3). The residue at position 3 (Lys-3) is an N6-methyllysine; alternate. The 236-residue stretch at 5–240 (KTHVNLVVIG…DAIEPPVRPS (236 aa)) folds into the tr-type G domain. Positions 14 to 21 (GHVDAGKS) are G1. 14–21 (GHVDAGKS) provides a ligand contact to GTP. Lys-30 carries the post-translational modification N6-methyllysine. The G2 stretch occupies residues 70 to 74 (GITID). Lys-79 bears the N6,N6,N6-trimethyllysine mark. The G3 stretch occupies residues 91 to 94 (DAPG). Residues 91–95 (DAPGH) and 153–156 (NKMD) contribute to the GTP site. A G4 region spans residues 153–156 (NKMD). The segment at 192–194 (SGW) is G5. Lys-317 is modified (N6,N6-dimethyllysine; alternate). Residue Lys-317 is modified to N6-methyllysine; alternate. At Lys-391 the chain carries N6-methyllysine.

Belongs to the TRAFAC class translation factor GTPase superfamily. Classic translation factor GTPase family. EF-Tu/EF-1A subfamily.

The protein resides in the cytoplasm. This protein promotes the GTP-dependent binding of aminoacyl-tRNA to the A-site of ribosomes during protein biosynthesis. The protein is Elongation factor 1-alpha (TEF) of Yarrowia lipolytica (strain CLIB 122 / E 150) (Yeast).